Reading from the N-terminus, the 343-residue chain is NADH-quinone oxidoreductase subunit H (343 aa).

The next 8 helical transmembrane spans lie at 19-39 (VAWT…GVAY), 89-109 (ALFI…WAVI), 124-144 (LLYV…AGWA), 158-178 (AAQI…VLMA), 198-218 (WYLW…VAET), 257-277 (ILVA…PVAF), 279-299 (PDGI…FLWF), and 314-334 (LGWK…GGMM).

The protein belongs to the complex I subunit 1 family. In terms of assembly, NDH-1 is composed of 14 different subunits. Subunits NuoA, H, J, K, L, M, N constitute the membrane sector of the complex.

The protein resides in the cell inner membrane. The catalysed reaction is a quinone + NADH + 5 H(+)(in) = a quinol + NAD(+) + 4 H(+)(out). Functionally, NDH-1 shuttles electrons from NADH, via FMN and iron-sulfur (Fe-S) centers, to quinones in the respiratory chain. The immediate electron acceptor for the enzyme in this species is believed to be ubiquinone. Couples the redox reaction to proton translocation (for every two electrons transferred, four hydrogen ions are translocated across the cytoplasmic membrane), and thus conserves the redox energy in a proton gradient. This subunit may bind ubiquinone. This is NADH-quinone oxidoreductase subunit H from Thiobacillus denitrificans (strain ATCC 25259 / T1).